Consider the following 494-residue polypeptide: ATP synthase subunit alpha, chloroplastic (494 aa).

Gly-170 to Thr-177 is a binding site for ATP.

The protein belongs to the ATPase alpha/beta chains family. In terms of assembly, F-type ATPases have 2 components, CF(1) - the catalytic core - and CF(0) - the membrane proton channel. CF(1) has five subunits: alpha(3), beta(3), gamma(1), delta(1), epsilon(1). CF(0) has four main subunits: a, b, b' and c.

It is found in the plastid. The protein resides in the chloroplast thylakoid membrane. The enzyme catalyses ATP + H2O + 4 H(+)(in) = ADP + phosphate + 5 H(+)(out). Its function is as follows. Produces ATP from ADP in the presence of a proton gradient across the membrane. The alpha chain is a regulatory subunit. The protein is ATP synthase subunit alpha, chloroplastic of Pinus thunbergii (Japanese black pine).